Here is a 37-residue protein sequence, read N- to C-terminus: MKVKPSVKPICDKCKVIRRHGRVMVICENPRHKQRQG.

This sequence belongs to the bacterial ribosomal protein bL36 family.

In Nocardioides sp. (strain ATCC BAA-499 / JS614), this protein is Large ribosomal subunit protein bL36.